A 117-amino-acid polypeptide reads, in one-letter code: Large ribosomal subunit protein bL20 (117 aa).

The protein belongs to the bacterial ribosomal protein bL20 family.

Functionally, binds directly to 23S ribosomal RNA and is necessary for the in vitro assembly process of the 50S ribosomal subunit. It is not involved in the protein synthesizing functions of that subunit. The polypeptide is Large ribosomal subunit protein bL20 (Solidesulfovibrio magneticus (strain ATCC 700980 / DSM 13731 / RS-1) (Desulfovibrio magneticus)).